Consider the following 230-residue polypeptide: Cytidylate kinase (230 aa).

12–20 is a binding site for ATP; the sequence is GPSGAGKGT.

Belongs to the cytidylate kinase family. Type 1 subfamily.

It is found in the cytoplasm. It carries out the reaction CMP + ATP = CDP + ADP. The catalysed reaction is dCMP + ATP = dCDP + ADP. This is Cytidylate kinase from Shewanella halifaxensis (strain HAW-EB4).